Reading from the N-terminus, the 158-residue chain is Cyclic pyranopterin monophosphate synthase (158 aa).

Residues 76 to 78 (LCH) and 114 to 115 (ME) each bind substrate. Asp-129 is a catalytic residue.

Belongs to the MoaC family. Homohexamer; trimer of dimers.

The enzyme catalyses (8S)-3',8-cyclo-7,8-dihydroguanosine 5'-triphosphate = cyclic pyranopterin phosphate + diphosphate. Its pathway is cofactor biosynthesis; molybdopterin biosynthesis. Its function is as follows. Catalyzes the conversion of (8S)-3',8-cyclo-7,8-dihydroguanosine 5'-triphosphate to cyclic pyranopterin monophosphate (cPMP). This Shewanella halifaxensis (strain HAW-EB4) protein is Cyclic pyranopterin monophosphate synthase.